The chain runs to 502 residues: ATP synthase subunit alpha (502 aa).

169-176 (GDRQTGKT) is an ATP binding site.

It belongs to the ATPase alpha/beta chains family. In terms of assembly, F-type ATPases have 2 components, CF(1) - the catalytic core - and CF(0) - the membrane proton channel. CF(1) has five subunits: alpha(3), beta(3), gamma(1), delta(1), epsilon(1). CF(0) has three main subunits: a(1), b(2) and c(9-12). The alpha and beta chains form an alternating ring which encloses part of the gamma chain. CF(1) is attached to CF(0) by a central stalk formed by the gamma and epsilon chains, while a peripheral stalk is formed by the delta and b chains.

The protein localises to the cell membrane. The catalysed reaction is ATP + H2O + 4 H(+)(in) = ADP + phosphate + 5 H(+)(out). In terms of biological role, produces ATP from ADP in the presence of a proton gradient across the membrane. The alpha chain is a regulatory subunit. The chain is ATP synthase subunit alpha from Desulfitobacterium hafniense (strain DSM 10664 / DCB-2).